Here is a 361-residue protein sequence, read N- to C-terminus: MTAQQAQRFPGTGLQWSLGLIALILAACLISDGLSGGPQLSLPLLLAGALSWLVCWIGVPRLRALKMGQVIRQEGPQSHQSKSGTPTMGGLLLVPCGVVVGSLVSPGDPRLLPIGLVTLAFMVIGGIDDWRSLTKRHNTGLTPKGKLLLQALAAGLFLLWAGLHGAIPTAIALPWGWLLPIGLLIWPLGLFVFLAESNATNLTDGLDGLAAGVGAIVLVGLSLQLMLRGNGGDPALAGYGAALAGAWLGFLLHNRHPARVFMGDTGSLAMGAALSAIALLSNSLWPLLLMGGLLLAESLSVILQVWVFKATKGADGQGKRLLRMAPLHHHFELGGWSERRVVVSFWGISLLLVALGLVLVP.

Helical transmembrane passes span 10–30, 40–60, 84–104, 107–127, 147–167, 175–195, 206–226, 232–252, 260–280, 288–308, and 341–361; these read PGTGLQWSLGLIALILAACLI, LSLPLLLAGALSWLVCWIGVP, GTPTMGGLLLVPCGVVVGSLV, GDPRLLPIGLVTLAFMVIGGI, LLLQALAAGLFLLWAGLHGAI, WGWLLPIGLLIWPLGLFVFLA, LDGLAAGVGAIVLVGLSLQLM, GDPALAGYGAALAGAWLGFLL, VFMGDTGSLAMGAALSAIALL, LLMGGLLLAESLSVILQVWVF, and VVVSFWGISLLLVALGLVLVP.

It belongs to the glycosyltransferase 4 family. MraY subfamily. It depends on Mg(2+) as a cofactor.

The protein resides in the cell inner membrane. The enzyme catalyses UDP-N-acetyl-alpha-D-muramoyl-L-alanyl-gamma-D-glutamyl-meso-2,6-diaminopimeloyl-D-alanyl-D-alanine + di-trans,octa-cis-undecaprenyl phosphate = di-trans,octa-cis-undecaprenyl diphospho-N-acetyl-alpha-D-muramoyl-L-alanyl-D-glutamyl-meso-2,6-diaminopimeloyl-D-alanyl-D-alanine + UMP. It participates in cell wall biogenesis; peptidoglycan biosynthesis. Catalyzes the initial step of the lipid cycle reactions in the biosynthesis of the cell wall peptidoglycan: transfers peptidoglycan precursor phospho-MurNAc-pentapeptide from UDP-MurNAc-pentapeptide onto the lipid carrier undecaprenyl phosphate, yielding undecaprenyl-pyrophosphoryl-MurNAc-pentapeptide, known as lipid I. This Synechococcus sp. (strain RCC307) protein is Phospho-N-acetylmuramoyl-pentapeptide-transferase.